Here is a 1368-residue protein sequence, read N- to C-terminus: DNA-directed RNA polymerase subunit beta (1368 aa).

It belongs to the RNA polymerase beta chain family. In terms of assembly, the RNAP catalytic core consists of 2 alpha, 1 beta, 1 beta' and 1 omega subunit. When a sigma factor is associated with the core the holoenzyme is formed, which can initiate transcription.

The enzyme catalyses RNA(n) + a ribonucleoside 5'-triphosphate = RNA(n+1) + diphosphate. In terms of biological role, DNA-dependent RNA polymerase catalyzes the transcription of DNA into RNA using the four ribonucleoside triphosphates as substrates. The protein is DNA-directed RNA polymerase subunit beta of Paraburkholderia phymatum (strain DSM 17167 / CIP 108236 / LMG 21445 / STM815) (Burkholderia phymatum).